The chain runs to 195 residues: dCTP deaminase (195 aa).

DCTP-binding positions include 105–110 (RSSLGR), aspartate 123, 131–133 (TLE), glutamine 152, tyrosine 166, lysine 173, and glutamine 177. Glutamate 133 (proton donor/acceptor) is an active-site residue. A disordered region spans residues 159-195 (KSPAERPYGAERGSKYQGQTGPQASRIQGDREFGGDQ). Residues 160–172 (SPAERPYGAERGS) show a composition bias toward basic and acidic residues. Over residues 174 to 184 (YQGQTGPQASR) the composition is skewed to polar residues. Residues 186-195 (QGDREFGGDQ) are compositionally biased toward basic and acidic residues.

This sequence belongs to the dCTP deaminase family. As to quaternary structure, homotrimer.

It catalyses the reaction dCTP + H2O + H(+) = dUTP + NH4(+). It participates in pyrimidine metabolism; dUMP biosynthesis; dUMP from dCTP (dUTP route): step 1/2. Catalyzes the deamination of dCTP to dUTP. The polypeptide is dCTP deaminase (Natronomonas pharaonis (strain ATCC 35678 / DSM 2160 / CIP 103997 / JCM 8858 / NBRC 14720 / NCIMB 2260 / Gabara) (Halobacterium pharaonis)).